The chain runs to 286 residues: Bifunctional protein FolD (286 aa).

Residues 165–167 and serine 190 each bind NADP(+); that span reads GRS.

The protein belongs to the tetrahydrofolate dehydrogenase/cyclohydrolase family. Homodimer.

It catalyses the reaction (6R)-5,10-methylene-5,6,7,8-tetrahydrofolate + NADP(+) = (6R)-5,10-methenyltetrahydrofolate + NADPH. It carries out the reaction (6R)-5,10-methenyltetrahydrofolate + H2O = (6R)-10-formyltetrahydrofolate + H(+). It functions in the pathway one-carbon metabolism; tetrahydrofolate interconversion. Catalyzes the oxidation of 5,10-methylenetetrahydrofolate to 5,10-methenyltetrahydrofolate and then the hydrolysis of 5,10-methenyltetrahydrofolate to 10-formyltetrahydrofolate. This chain is Bifunctional protein FolD, found in Paraburkholderia xenovorans (strain LB400).